A 65-amino-acid polypeptide reads, in one-letter code: Large ribosomal subunit protein bL35 (65 aa).

A compositionally biased stretch (basic residues) spans 1–45; the sequence is MPKMKSHSGAKKRFKKTGNGKIKRKKANKGHLLTKKNAKRKRQLR. Residues 1-65 form a disordered region; sequence MPKMKSHSGA…RDRIKRMLST (65 aa). Positions 48-57 are enriched in basic and acidic residues; it reads VVVDDKANRD.

Belongs to the bacterial ribosomal protein bL35 family.

The sequence is that of Large ribosomal subunit protein bL35 from Salinibacter ruber (strain DSM 13855 / M31).